The primary structure comprises 222 residues: Nucleoside triphosphate pyrophosphatase (222 aa).

The active-site Proton acceptor is Asp-82.

The protein belongs to the Maf family. A divalent metal cation serves as cofactor.

It localises to the cytoplasm. It catalyses the reaction a ribonucleoside 5'-triphosphate + H2O = a ribonucleoside 5'-phosphate + diphosphate + H(+). The catalysed reaction is a 2'-deoxyribonucleoside 5'-triphosphate + H2O = a 2'-deoxyribonucleoside 5'-phosphate + diphosphate + H(+). In terms of biological role, nucleoside triphosphate pyrophosphatase. May have a dual role in cell division arrest and in preventing the incorporation of modified nucleotides into cellular nucleic acids. In Mycobacterium tuberculosis (strain ATCC 25177 / H37Ra), this protein is Nucleoside triphosphate pyrophosphatase.